A 418-amino-acid chain; its full sequence is L-rhamnose isomerase (418 aa).

The Mn(2+) site is built by His262, Asp294, and Asp296.

It belongs to the rhamnose isomerase family. Homotetramer. Mn(2+) is required as a cofactor.

The protein resides in the cytoplasm. It carries out the reaction L-rhamnopyranose = L-rhamnulose. It functions in the pathway carbohydrate degradation; L-rhamnose degradation; glycerone phosphate from L-rhamnose: step 1/3. Catalyzes the interconversion of L-rhamnose and L-rhamnulose. This chain is L-rhamnose isomerase, found in Yersinia pseudotuberculosis serotype IB (strain PB1/+).